The sequence spans 132 residues: uncharacterized protein (132 aa).

The next 3 helical transmembrane spans lie at 18-38 (MLFI…FIGI), 50-70 (IIYF…GVFI), and 71-91 (VVPL…LYLI).

It localises to the cell membrane. This is an uncharacterized protein from Bacillus subtilis (strain 168).